We begin with the raw amino-acid sequence, 234 residues long: Ribose-5-phosphate isomerase A (234 aa).

Residues 28 to 31, 85 to 88, and 98 to 101 contribute to the substrate site; these read TGST, DGAD, and KGLG. The Proton acceptor role is filled by glutamate 107. Substrate is bound at residue lysine 125.

The protein belongs to the ribose 5-phosphate isomerase family. As to quaternary structure, homodimer.

It catalyses the reaction aldehydo-D-ribose 5-phosphate = D-ribulose 5-phosphate. It participates in carbohydrate degradation; pentose phosphate pathway; D-ribose 5-phosphate from D-ribulose 5-phosphate (non-oxidative stage): step 1/1. Its function is as follows. Catalyzes the reversible conversion of ribose-5-phosphate to ribulose 5-phosphate. The chain is Ribose-5-phosphate isomerase A from Roseiflexus castenholzii (strain DSM 13941 / HLO8).